Here is a 357-residue protein sequence, read N- to C-terminus: MSDQQTCVIDNGSGVVKAGFAGEDAPRAVFPSIVGRPKNVSALIGVDSASEYLGDEAQQKRGVLKIWNHTFYVELRVQPDEHPILLTEAPLSPKTNREKMTQIIFETFNLPALYVAIQAVLSLYSRGRTTGIVCDAGDGLTHTVPIYEGFSIPHAVSTIQLAGRDLTTFLAKLFTERGYNFTSSAELEIVRDIKEKLCFLALNYESALKQSHDSSQFEKNYELPHGKVITIGSERFRCPEYLFKPLEMNGRELDSIQDLTYKSIQECDVDVRRDLYQNIILSGGTTMYEGIGERLLKEIENRAPKSINVKVIASPDRRFAVWRGGSTLTSLSTFASMWITKEDYDENGASIVHRKCI.

It belongs to the actin family. Post-translationally, met-1 may be removed after translation.

It localises to the cytoplasm. The protein resides in the cytoskeleton. It catalyses the reaction ATP + H2O = ADP + phosphate + H(+). In terms of biological role, actins are highly conserved proteins that are involved in various types of cell motility and are ubiquitously expressed in all eukaryotic cells. The sequence is that of Actin, macronuclear from Oxytricha fallax.